The sequence spans 380 residues: ATPase ASNA1 homolog (380 aa).

Position 48-55 (48-55 (KGGVGKTT)) interacts with ATP. Aspartate 77 is an active-site residue. 2 residues coordinate ATP: glutamate 248 and asparagine 275.

This sequence belongs to the arsA ATPase family. As to quaternary structure, homodimer.

It localises to the cytoplasm. The protein resides in the endoplasmic reticulum. Its function is as follows. ATPase required for the post-translational delivery of tail-anchored (TA) proteins to the endoplasmic reticulum. Recognizes and selectively binds the transmembrane domain of TA proteins in the cytosol. This complex then targets to the endoplasmic reticulum by membrane-bound receptors, where the tail-anchored protein is released for insertion. This process is regulated by ATP binding and hydrolysis. ATP binding drives the homodimer towards the closed dimer state, facilitating recognition of newly synthesized TA membrane proteins. ATP hydrolysis is required for insertion. Subsequently, the homodimer reverts towards the open dimer state, lowering its affinity for the membrane-bound receptor, and returning it to the cytosol to initiate a new round of targeting. The sequence is that of ATPase ASNA1 homolog from Plasmodium chabaudi chabaudi.